The primary structure comprises 236 residues: UPF0502 protein Bpro_3844 (236 aa).

Belongs to the UPF0502 family.

This is UPF0502 protein Bpro_3844 from Polaromonas sp. (strain JS666 / ATCC BAA-500).